Here is a 364-residue protein sequence, read N- to C-terminus: Photoreceptor outer segment membrane glycoprotein 2 (364 aa).

Residues 1–24 lie on the Cytoplasmic side of the membrane; that stretch reads MTVLKVKFTKTKRDKLAQILWILN. The chain crosses the membrane as a helical span at residues 25 to 43; the sequence is WVSVVSGIILFSLGLFLKI. Topologically, residues 44 to 61 are lumenal; sequence EIKKRNEVMAKGDINSVP. A helical membrane pass occupies residues 62–80; that stretch reads NMLISVGVIACVVNFLGGK. The Cytoplasmic portion of the chain corresponds to 81 to 99; sequence ICYDCSDANKFSRWKLIML. The chain crosses the membrane as a helical span at residues 100–123; it reads PYIICTFCFTFCILLGALMCYTMR. Residues 124 to 264 are Lumenal-facing; that stretch reads NELEESLYLG…LEYYTAIMRS (141 aa). N229 carries N-linked (GlcNAc...) asparagine glycosylation. Residues 265 to 290 traverse the membrane as a helical segment; that stretch reads IGIAALLIWLFELSVLIGVRYLQTAM. Over 291–364 the chain is Cytoplasmic; it reads KNVLLQGDLQ…VTAKSIPAAS (74 aa).

This sequence belongs to the PRPH2/ROM1 family.

The protein resides in the membrane. The chain is Photoreceptor outer segment membrane glycoprotein 2 from Gallus gallus (Chicken).